The sequence spans 363 residues: Phosphoserine aminotransferase (363 aa).

Arg42 provides a ligand contact to L-glutamate. Residues 76 to 77, Trp102, Thr156, Asp175, and Gln198 contribute to the pyridoxal 5'-phosphate site; that span reads GR. At Lys199 the chain carries N6-(pyridoxal phosphate)lysine. 240 to 241 contributes to the pyridoxal 5'-phosphate binding site; the sequence is NT.

Belongs to the class-V pyridoxal-phosphate-dependent aminotransferase family. SerC subfamily. As to quaternary structure, homodimer. It depends on pyridoxal 5'-phosphate as a cofactor.

Its subcellular location is the cytoplasm. The catalysed reaction is O-phospho-L-serine + 2-oxoglutarate = 3-phosphooxypyruvate + L-glutamate. The enzyme catalyses 4-(phosphooxy)-L-threonine + 2-oxoglutarate = (R)-3-hydroxy-2-oxo-4-phosphooxybutanoate + L-glutamate. It functions in the pathway amino-acid biosynthesis; L-serine biosynthesis; L-serine from 3-phospho-D-glycerate: step 2/3. Its pathway is cofactor biosynthesis; pyridoxine 5'-phosphate biosynthesis; pyridoxine 5'-phosphate from D-erythrose 4-phosphate: step 3/5. In terms of biological role, catalyzes the reversible conversion of 3-phosphohydroxypyruvate to phosphoserine and of 3-hydroxy-2-oxo-4-phosphonooxybutanoate to phosphohydroxythreonine. This chain is Phosphoserine aminotransferase, found in Shewanella baltica (strain OS185).